Consider the following 636-residue polypeptide: Probable cyclin-dependent serine/threonine-protein kinase DDB_G0278487 (636 aa).

The disordered stretch occupies residues Met-1 to Ser-41. One can recognise a Protein kinase domain in the interval Tyr-64–Phe-343. ATP-binding positions include Ile-70–Val-78 and Lys-93. Asp-184 acts as the Proton acceptor in catalysis. Disordered regions lie at residues Glu-378–Gln-408, Lys-473–Tyr-506, Ser-527–Asp-555, and Asn-579–His-636. The segment covering Lys-473 to Arg-485 has biased composition (basic and acidic residues). Positions Glu-486–Glu-499 are enriched in low complexity. Over residues Thr-529–Asp-555 the composition is skewed to acidic residues. Composition is skewed to low complexity over residues Asn-579–Gln-594 and Asn-617–Asn-628.

Belongs to the protein kinase superfamily. CMGC Ser/Thr protein kinase family. CDC2/CDKX subfamily.

It catalyses the reaction L-seryl-[protein] + ATP = O-phospho-L-seryl-[protein] + ADP + H(+). It carries out the reaction L-threonyl-[protein] + ATP = O-phospho-L-threonyl-[protein] + ADP + H(+). This Dictyostelium discoideum (Social amoeba) protein is Probable cyclin-dependent serine/threonine-protein kinase DDB_G0278487.